A 314-amino-acid chain; its full sequence is Zinc transporter ZIP3 (314 aa).

Over 1–3 (MVK) the chain is Extracellular. A helical membrane pass occupies residues 4-24 (LLVAKILCMVGMFFFMLLGSL). Residues 25–42 (LPVKIIEMDFEKAHRSKK) lie on the Cytoplasmic side of the membrane. Residues 43–63 (ILSLCNTFGGGVFLATCFNAL) form a helical membrane-spanning segment. The Extracellular segment spans residues 64–85 (LPAVREKLKEVLTLAHISTDYP). Residues 86 to 106 (LAETIMLLGFFMTVFLEQLVL) traverse the membrane as a helical segment. Residues 107 to 169 (TFRKERPAFI…QELSRSSPLR (63 aa)) are Cytoplasmic-facing. Residues S125 and S129 each carry the phosphoserine modification. The chain crosses the membrane as a helical span at residues 170 to 190 (LLSLVFALSAHSVFEGLALGL). Residues 191–196 (QEEGEK) are Extracellular-facing. The chain crosses the membrane as a helical span at residues 197 to 217 (VVSLFVGVAIHETLVAVALGI). Residues 218-229 (NMARSAMALRDA) lie on the Cytoplasmic side of the membrane. The chain crosses the membrane as a helical span at residues 230–250 (AKLAVTVSAMIPLGISLGLGI). Over 251 to 262 (DSAQGMPSSVAS) the chain is Extracellular. Residues 263 to 283 (VLLQGLAGGTFLFVTFFEILA) traverse the membrane as a helical segment. Residues 284-292 (KELEEKSDR) are Cytoplasmic-facing. A helical transmembrane segment spans residues 293-313 (LLKVLFLVLGYTVLAGMVFIK). Residue W314 is a topological domain, extracellular.

This sequence belongs to the ZIP transporter (TC 2.A.5) family.

The protein localises to the cell membrane. It localises to the apical cell membrane. The catalysed reaction is Zn(2+)(in) = Zn(2+)(out). In terms of biological role, transporter for the divalent cation Zn(2+). Mediates the influx of Zn(2+) into cells from extracellular space. Controls Zn(2+) accumulation into dentate gyrus granule cells in the hippocampus. Mediates Zn(2+) reuptake from the secreted milk within the alveolar lumen. This chain is Zinc transporter ZIP3 (SLC39A3), found in Bos taurus (Bovine).